The sequence spans 264 residues: E3 ubiquitin-protein ligase MARCHF8 (264 aa).

The disordered stretch occupies residues 15–47 (LGHSVSRSSNISKAGSPTSVSAPSRFPRTSVTP). Over residues 16–47 (GHSVSRSSNISKAGSPTSVSAPSRFPRTSVTP) the composition is skewed to polar residues. The RING-CH-type zinc finger occupies 45-106 (VTPSSQDICR…ELCKFEFIME (62 aa)). Zn(2+)-binding residues include Cys-53, Cys-56, Cys-70, Cys-72, His-80, Cys-83, Cys-96, and Cys-99. Transmembrane regions (helical) follow at residues 130–150 (CSVT…YVLI) and 170–190 (FWTK…FMYV).

The protein resides in the cytoplasmic vesicle membrane. The protein localises to the lysosome membrane. It localises to the early endosome membrane. It carries out the reaction S-ubiquitinyl-[E2 ubiquitin-conjugating enzyme]-L-cysteine + [acceptor protein]-L-lysine = [E2 ubiquitin-conjugating enzyme]-L-cysteine + N(6)-ubiquitinyl-[acceptor protein]-L-lysine.. It functions in the pathway protein modification; protein ubiquitination. Its function is as follows. E3 ubiquitin-protein ligase that mediates ubiquitination of cd86 and MHC class II proteins, such as hla-dr alpha and beta, and promotes their subsequent endocytosis and sorting to lysosomes via multivesicular bodies. The sequence is that of E3 ubiquitin-protein ligase MARCHF8 (marchf8) from Xenopus laevis (African clawed frog).